A 199-amino-acid polypeptide reads, in one-letter code: Glycerol-3-phosphate acyltransferase (199 aa).

5 consecutive transmembrane segments (helical) span residues 3-23, 50-70, 77-97, 110-130, and 136-156; these read YILI…YLLP, VIGF…VLVF, IHYT…PVFL, GVFF…WISI, and YVSL…FFFN.

This sequence belongs to the PlsY family. In terms of assembly, probably interacts with PlsX.

It localises to the cell inner membrane. It carries out the reaction an acyl phosphate + sn-glycerol 3-phosphate = a 1-acyl-sn-glycero-3-phosphate + phosphate. The protein operates within lipid metabolism; phospholipid metabolism. In terms of biological role, catalyzes the transfer of an acyl group from acyl-phosphate (acyl-PO(4)) to glycerol-3-phosphate (G3P) to form lysophosphatidic acid (LPA). This enzyme utilizes acyl-phosphate as fatty acyl donor, but not acyl-CoA or acyl-ACP. In Pseudothermotoga lettingae (strain ATCC BAA-301 / DSM 14385 / NBRC 107922 / TMO) (Thermotoga lettingae), this protein is Glycerol-3-phosphate acyltransferase.